Consider the following 51-residue polypeptide: MREKIKLESSAGTGHFYTTTKNKRTTPEKIEITKFDPVARKHVKYKETKLK.

The protein belongs to the bacterial ribosomal protein bL33 family.

This chain is Large ribosomal subunit protein bL33, found in Nitrosospira multiformis (strain ATCC 25196 / NCIMB 11849 / C 71).